Reading from the N-terminus, the 320-residue chain is MMLMRESPDDRHYTVSATGVWKKRGGIDVLRGLDMYVRRGERYGIMGTNGAGKSSLINIILGLTPPDRGTVTVFGKDMRRQGHLARARIGVVPQDDCLEQNMTPYENVMLYGRLCRMTASEARKRADQIFEKFSMMDCANRPVRLLSGGMRRLTMVARALVNDPYVIILDEATVGLDAKSRSALWQQIEASNATGATVLVISHLAEDLERMTDRIACICAGTVRAEWETAALLKALGALKILEIDHSVSPRGKELFCNHGLHVHENDGRLSAVHPSSDFALEAVLKKEAVPTTTRFATLDDIIRFPGFPWTGVGGVNGEK.

Residues 15–245 (VSATGVWKKR…LGALKILEID (231 aa)) enclose the ABC transporter domain. 47–54 (GTNGAGKS) contributes to the ATP binding site.

Belongs to the ABC transporter superfamily. Lipooligosaccharide exporter (TC 3.A.1.102) family. In terms of assembly, the complex is composed of two ATP-binding proteins (NodI) and two transmembrane proteins (NodJ).

It is found in the cell inner membrane. Functionally, part of the ABC transporter complex NodIJ involved in the export of the nodulation factors (Nod factors), the bacterial signal molecules that induce symbiosis and subsequent nodulation induction. Nod factors are LCO (lipo-chitin oligosaccharide), a modified beta-1,4-linked N-acetylglucosamine oligosaccharide. This subunit is responsible for energy coupling to the transport system. This chain is Nod factor export ATP-binding protein I, found in Azorhizobium caulinodans (strain ATCC 43989 / DSM 5975 / JCM 20966 / LMG 6465 / NBRC 14845 / NCIMB 13405 / ORS 571).